The sequence spans 456 residues: tRNA modification GTPase MnmE (456 aa).

(6S)-5-formyl-5,6,7,8-tetrahydrofolate-binding residues include arginine 24, glutamate 81, and lysine 120. One can recognise a TrmE-type G domain in the interval 216–379; it reads GMTVVIAGRP…LRDHLKACMG (164 aa). Asparagine 226 lines the K(+) pocket. Residues 226–231, 245–251, 270–273, and 335–338 each bind GTP; these read NAGKSS, TDIAGTT, DTAG, and NKAD. Serine 230 is a Mg(2+) binding site. 3 residues coordinate K(+): threonine 245, isoleucine 247, and threonine 250. Position 251 (threonine 251) interacts with Mg(2+). Position 456 (lysine 456) interacts with (6S)-5-formyl-5,6,7,8-tetrahydrofolate.

It belongs to the TRAFAC class TrmE-Era-EngA-EngB-Septin-like GTPase superfamily. TrmE GTPase family. As to quaternary structure, homodimer. Heterotetramer of two MnmE and two MnmG subunits. K(+) serves as cofactor.

Its subcellular location is the cytoplasm. Its function is as follows. Exhibits a very high intrinsic GTPase hydrolysis rate. Involved in the addition of a carboxymethylaminomethyl (cmnm) group at the wobble position (U34) of certain tRNAs, forming tRNA-cmnm(5)s(2)U34. This is tRNA modification GTPase MnmE from Pseudomonas putida (strain GB-1).